The primary structure comprises 410 residues: Probable protein S-acyltransferase 6 (410 aa).

The next 2 helical transmembrane spans lie at L45–S65 and G76–L96. The tract at residues N108–P129 is disordered. The DHHC domain maps to K147–F197. Catalysis depends on C177, which acts as the S-palmitoyl cysteine intermediate. 2 consecutive transmembrane segments (helical) span residues F191–C211 and S235–F255. Residue S325 is modified to Phosphoserine.

This sequence belongs to the DHHC palmitoyltransferase family.

Its subcellular location is the cell membrane. It carries out the reaction L-cysteinyl-[protein] + hexadecanoyl-CoA = S-hexadecanoyl-L-cysteinyl-[protein] + CoA. Its function is as follows. Palmitoyl acyltransferase. The sequence is that of Probable protein S-acyltransferase 6 (PAT06) from Arabidopsis thaliana (Mouse-ear cress).